The following is a 65-amino-acid chain: Large ribosomal subunit protein bL35 (65 aa).

The tract at residues 1-25 is disordered; sequence MPKMKSHRGAAKRFKKTGTGKLKRA.

The protein belongs to the bacterial ribosomal protein bL35 family.

This chain is Large ribosomal subunit protein bL35, found in Clostridium botulinum (strain Eklund 17B / Type B).